Reading from the N-terminus, the 128-residue chain is NHP2-like protein 1 (128 aa).

The interaction with U4 snRNA and U4atac snRNA stretch occupies residues Arg36–Arg48. The tract at residues Ser96 to Val128 is important for U4 snRNA-binding.

The protein belongs to the eukaryotic ribosomal protein eL8 family. As to quaternary structure, identified in the spliceosome B complex. Component of the U4/U6-U5 tri-snRNP complex. Part of the small subunit (SSU) processome, composed of more than 70 proteins and the RNA chaperone small nucleolar RNA (snoRNA) U3.

It is found in the nucleus. The protein resides in the nucleolus. Part of the small subunit (SSU) processome, first precursor of the small eukaryotic ribosomal subunit. During the assembly of the SSU processome in the nucleolus, many ribosome biogenesis factors, an RNA chaperone and ribosomal proteins associate with the nascent pre-rRNA and work in concert to generate RNA folding, modifications, rearrangements and cleavage as well as targeted degradation of pre-ribosomal RNA by the RNA exosome. Involved in pre-mRNA splicing as component of the spliceosome. Binds to the 5'-stem-loop of U4 snRNA and thereby contributes to spliceosome assembly. The protein undergoes a conformational change upon RNA-binding. Core component of box C/D small nucleolar ribonucleoprotein (snoRNP) complexes that function in methylation of multiple sites on ribosomal RNAs (rRNAs) and messenger RNAs (mRNAs). In Xenopus laevis (African clawed frog), this protein is NHP2-like protein 1.